The sequence spans 142 residues: Putative pre-16S rRNA nuclease (142 aa).

This sequence belongs to the YqgF nuclease family.

It localises to the cytoplasm. Its function is as follows. Could be a nuclease involved in processing of the 5'-end of pre-16S rRNA. This Malacoplasma penetrans (strain HF-2) (Mycoplasma penetrans) protein is Putative pre-16S rRNA nuclease.